The following is a 40-amino-acid chain: U4-ctenitoxin-Co1c (40 aa).

4 disulfides stabilise this stretch: C3–C20, C10–C26, C19–C40, and C28–C38.

Expressed by the venom gland.

It is found in the secreted. Functionally, not toxic to mice by intracerebroventricular injection. This chain is U4-ctenitoxin-Co1c, found in Ctenus ornatus (Brazilian spider).